Consider the following 268-residue polypeptide: MAAVPDTSDMMTYCSGNENDLFFEEDGPKQMKGSFQDLDLSSMGDGGIQLQFSHHLYNKTFKHAMSIIVAVEKLKKIPVPCSQAFQDDDLRSLFSVIFEEEPIICDNWDEGYVCDAAMHSVNCRLRDIYHKSLVLSGACELQAVHLNGENTNQQVVFCMSFVQGEEETDKIPVALGLKEKNLYLSCGMKDGKPTLQLETVDPNTYPKRKMEKRFVFNKMEIKGNVEFESAMYPNWYISTSQAEKSPVFLGNTRGGRDITDFIMEITSA.

Residues 1 to 115 constitute a propeptide that is removed on maturation; sequence MAAVPDTSDM…DNWDEGYVCD (115 aa).

Belongs to the IL-1 family. As to quaternary structure, monomer. In its precursor form, weakly interacts with full-length MEFV; the mature cytokine does not interact at all. Interacts with integrins ITGAV:ITGBV and ITGA5:ITGB1; integrin-binding is required for IL1B signaling. Interacts with cargo receptor TMED10; the interaction is direct and is required for the secretion of IL1B mature form. Interacts with HSP90AB1; the interaction facilitates cargo translocation into the ERGIC. Interacts with HSP90B1; the interaction facilitates cargo translocation into the ERGIC.

Its subcellular location is the cytoplasm. It is found in the cytosol. The protein resides in the secreted. It localises to the lysosome. The protein localises to the extracellular exosome. Its function is as follows. Potent pro-inflammatory cytokine. Initially discovered as the major endogenous pyrogen, induces prostaglandin synthesis, neutrophil influx and activation, T-cell activation and cytokine production, B-cell activation and antibody production, and fibroblast proliferation and collagen production. Promotes Th17 differentiation of T-cells. Synergizes with IL12/interleukin-12 to induce IFNG synthesis from T-helper 1 (Th1) cells. Plays a role in angiogenesis by inducing VEGF production synergistically with TNF and IL6. Involved in transduction of inflammation downstream of pyroptosis: its mature form is specifically released in the extracellular milieu by passing through the gasdermin-D (GSDMD) pore. This chain is Interleukin-1 beta (IL1B), found in Equus caballus (Horse).